A 415-amino-acid chain; its full sequence is Squalene synthase 11 (415 aa).

The next 2 membrane-spanning stretches (helical) occupy residues 281–301 and 392–412; these read AIFRFCAIPQIMAIGTLALCF and LIIILFIILAILYAYLSSNLP.

It belongs to the phytoene/squalene synthase family. Requires Mg(2+) as cofactor. The cofactor is Mn(2+).

The protein localises to the endoplasmic reticulum membrane. It carries out the reaction 2 (2E,6E)-farnesyl diphosphate + NADH + H(+) = squalene + 2 diphosphate + NAD(+). The catalysed reaction is 2 (2E,6E)-farnesyl diphosphate + NADPH + H(+) = squalene + 2 diphosphate + NADP(+). The protein operates within terpene metabolism; lanosterol biosynthesis; lanosterol from farnesyl diphosphate: step 1/3. Its function is as follows. Component of the triterpene saponins (e.g. ginsenosides or panaxosides) and phytosterols biosynthetic pathways. Catalyzes the biosynthesis of squalene. The sequence is that of Squalene synthase 11 from Panax ginseng (Korean ginseng).